The sequence spans 339 residues: Dual specificity protein phosphatase 12 (339 aa).

M1 bears the N-acetylmethionine mark. The segment at 1–25 (MLEAQGSNHGCERQAPTASPASSAG) is disordered. In terms of domain architecture, Tyrosine-protein phosphatase spans 26 to 170 (HAVEVRPGLY…LKLYEAMGYE (145 aa)). C114 serves as the catalytic Phosphocysteine intermediate. 115 to 120 (HAGVSR) is a substrate binding site. S334 carries the phosphoserine modification.

It belongs to the protein-tyrosine phosphatase family. Non-receptor class dual specificity subfamily. In terms of assembly, monomer. Requires Zn(2+) as cofactor.

The protein localises to the nucleus. Its subcellular location is the cytoplasm. It is found in the cytosol. The catalysed reaction is O-phospho-L-tyrosyl-[protein] + H2O = L-tyrosyl-[protein] + phosphate. It catalyses the reaction O-phospho-L-seryl-[protein] + H2O = L-seryl-[protein] + phosphate. It carries out the reaction O-phospho-L-threonyl-[protein] + H2O = L-threonyl-[protein] + phosphate. Functionally, dual specificity phosphatase; can dephosphorylate both phosphotyrosine and phosphoserine or phosphothreonine residues. Can dephosphorylate glucokinase (in vitro). Has phosphatase activity with the synthetic substrate 6,8-difluoro-4-methylumbelliferyl phosphate and other in vitro substrates. The chain is Dual specificity protein phosphatase 12 (Dusp12) from Mus musculus (Mouse).